A 159-amino-acid chain; its full sequence is Ribosomal RNA large subunit methyltransferase H (159 aa).

Residues L76, G108, and 127 to 132 each bind S-adenosyl-L-methionine; that span reads FSNMTF.

This sequence belongs to the RNA methyltransferase RlmH family. As to quaternary structure, homodimer.

The protein resides in the cytoplasm. The enzyme catalyses pseudouridine(1915) in 23S rRNA + S-adenosyl-L-methionine = N(3)-methylpseudouridine(1915) in 23S rRNA + S-adenosyl-L-homocysteine + H(+). Functionally, specifically methylates the pseudouridine at position 1915 (m3Psi1915) in 23S rRNA. This Staphylococcus epidermidis (strain ATCC 35984 / DSM 28319 / BCRC 17069 / CCUG 31568 / BM 3577 / RP62A) protein is Ribosomal RNA large subunit methyltransferase H.